Consider the following 210-residue polypeptide: Late histone H1 (210 aa).

Disordered stretches follow at residues 1–21 and 86–210; these read MSAA…HPPT and SFKL…AAKK. Positions 17–91 constitute an H15 domain; it reads AHPPTSQMVV…GASGSFKLGK (75 aa). Basic residues predominate over residues 104–113; the sequence is AAAKKAKLAA. Positions 114–123 are enriched in basic and acidic residues; the sequence is KKKEQKEKKA. Residues 124 to 210 show a composition bias toward basic residues; the sequence is AKTKARKEKL…KPAAKKAAKK (87 aa).

This sequence belongs to the histone H1/H5 family.

It is found in the nucleus. The protein localises to the chromosome. Functionally, histones H1 are necessary for the condensation of nucleosome chains into higher-order structures. This Lytechinus pictus (Painted sea urchin) protein is Late histone H1.